We begin with the raw amino-acid sequence, 289 residues long: Diaminopimelate epimerase (289 aa).

Positions 11 and 78 each coordinate substrate. The active-site Proton donor is Cys87. Residues 88-89 (GN), Asn163, Asn199, and 217-218 (ER) each bind substrate. The active-site Proton acceptor is Cys226. 227–228 (GT) contacts substrate.

It belongs to the diaminopimelate epimerase family. As to quaternary structure, homodimer.

It localises to the cytoplasm. The catalysed reaction is (2S,6S)-2,6-diaminopimelate = meso-2,6-diaminopimelate. The protein operates within amino-acid biosynthesis; L-lysine biosynthesis via DAP pathway; DL-2,6-diaminopimelate from LL-2,6-diaminopimelate: step 1/1. In terms of biological role, catalyzes the stereoinversion of LL-2,6-diaminopimelate (L,L-DAP) to meso-diaminopimelate (meso-DAP), a precursor of L-lysine and an essential component of the bacterial peptidoglycan. In Mycobacterium bovis (strain ATCC BAA-935 / AF2122/97), this protein is Diaminopimelate epimerase.